The primary structure comprises 308 residues: Dipeptide transport system permease protein DppB (308 aa).

7 helical membrane-spanning segments follow: residues 10–30, 59–79, 100–120, 131–151, 168–188, 228–248, and 278–298; these read WAMA…MKVI, LIFQ…GPSI, LGMT…VIAA, AMSL…TLLI, SPIH…AIIA, MPVI…SFVI, and VFYS…YGLL. The region spanning 94–295 is the ABC transmembrane type-1 domain; it reads FPVSFELGMT…IMLFLVDLAY (202 aa).

This sequence belongs to the binding-protein-dependent transport system permease family. OppBC subfamily.

It is found in the cell membrane. Functionally, probably part of the ABC transporter DppBCDE involved in dipeptide transport. Responsible for the translocation of the substrate across the membrane. The protein is Dipeptide transport system permease protein DppB (dppB) of Bacillus subtilis (strain 168).